A 626-amino-acid chain; its full sequence is L-amino-acid oxidase 4 (626 aa).

The first 18 residues, 1–18 (KSFFRSLVAASLVIVSYS), serve as a signal peptide directing secretion. N-linked (GlcNAc...) asparagine glycosylation occurs at Asn54. 6 residues coordinate FAD: Gly75, Glu94, Ala95, Arg102, Met122, and Arg123. Arg123 is a binding site for L-glutamate. Arg123 lines the L-glutamine pocket. Arg123 contacts L-lysine. L-phenylalanine is bound at residue Arg123. Residues Asn164, Asn193, and Asn331 are each glycosylated (N-linked (GlcNAc...) asparagine). Val334 contacts FAD. Tyr457 serves as a coordination point for L-glutamate. Tyr457 contacts L-glutamine. Tyr457 serves as a coordination point for L-lysine. Tyr457 serves as a coordination point for L-phenylalanine. Glu551 provides a ligand contact to FAD. L-phenylalanine is bound at residue Ala558. FAD is bound by residues Trp559 and Val560.

It belongs to the flavin monoamine oxidase family. FIG1 subfamily. Homodimer. FAD is required as a cofactor. Post-translationally, out of the 4 glycosylated residues, Asn-54 is hypermannosylated. The presence of a hypermannosylated N-glycan on Asn-54 leads to adoption of a more active conformation in the absence of acid activation.

Its subcellular location is the secreted. It carries out the reaction an L-alpha-amino acid + O2 + H2O = a 2-oxocarboxylate + H2O2 + NH4(+). The enzyme catalyses L-lysine + O2 + H2O = 6-amino-2-oxohexanoate + H2O2 + NH4(+). The catalysed reaction is L-glutamate + O2 + H2O = H2O2 + 2-oxoglutarate + NH4(+). It catalyses the reaction L-arginine + O2 + H2O = 5-guanidino-2-oxopentanoate + H2O2 + NH4(+). It carries out the reaction L-leucine + O2 + H2O = 4-methyl-2-oxopentanoate + H2O2 + NH4(+). The enzyme catalyses L-asparagine + O2 + H2O = 2-oxosuccinamate + H2O2 + NH4(+). The catalysed reaction is L-histidine + O2 + H2O = 3-(imidazol-5-yl)pyruvate + H2O2 + NH4(+). It catalyses the reaction L-isoleucine + O2 + H2O = (S)-3-methyl-2-oxopentanoate + H2O2 + NH4(+). It carries out the reaction L-methionine + O2 + H2O = 4-methylsulfanyl-2-oxobutanoate + H2O2 + NH4(+). The enzyme catalyses L-phenylalanine + O2 + H2O = 3-phenylpyruvate + H2O2 + NH4(+). The catalysed reaction is L-tyrosine + O2 + H2O = 3-(4-hydroxyphenyl)pyruvate + H2O2 + NH4(+). It catalyses the reaction L-glutamine + O2 + H2O = 2-oxoglutaramate + H2O2 + NH4(+). It carries out the reaction L-alanine + O2 + H2O = pyruvate + H2O2 + NH4(+). With respect to regulation, LAAO4 is activated by exposure to acidic pH, the detergent sodium dodecyl sulfate, or freezing. Functionally, catalyzes the oxidative deamination of L-amino acids with molecular oxygen to the corresponding alpha-keto acids and ammonia. L-glutamine shows the highest relative activity but LAAO4 has a broad substrate specificity, including L-amino acids with big aromatic, acidic and basic side chains. Methyl esters of these L-amino acids are also accepted, ethyl esters are converted but with lower activity, whereas D-Amino acids are not converted. No reaction is detected for small polar amino acids such as L-cysteine or L-aspartate, and very little for small, branched hydrophobic amino acids like L-valine. The sequence is that of L-amino-acid oxidase 4 from Hebeloma cylindrosporum.